The sequence spans 59 residues: Sec-independent protein translocase protein TatA (59 aa).

The chain crosses the membrane as a helical span at residues 1 to 21; the sequence is MGRLGLTEILVIVGIVILLFG.

Belongs to the TatA/E family. Forms a complex with TatC.

The protein localises to the cell inner membrane. Its function is as follows. Part of the twin-arginine translocation (Tat) system that transports large folded proteins containing a characteristic twin-arginine motif in their signal peptide across membranes. TatA could form the protein-conducting channel of the Tat system. This is Sec-independent protein translocase protein TatA from Flavobacterium johnsoniae (strain ATCC 17061 / DSM 2064 / JCM 8514 / BCRC 14874 / CCUG 350202 / NBRC 14942 / NCIMB 11054 / UW101) (Cytophaga johnsonae).